The sequence spans 444 residues: Phosphoglucosamine mutase (444 aa).

The active-site Phosphoserine intermediate is the S101. 4 residues coordinate Mg(2+): S101, D240, D242, and D244. Residue S101 is modified to Phosphoserine.

The protein belongs to the phosphohexose mutase family. Mg(2+) serves as cofactor. Post-translationally, activated by phosphorylation.

It carries out the reaction alpha-D-glucosamine 1-phosphate = D-glucosamine 6-phosphate. Its function is as follows. Catalyzes the conversion of glucosamine-6-phosphate to glucosamine-1-phosphate. The sequence is that of Phosphoglucosamine mutase from Photobacterium profundum (strain SS9).